We begin with the raw amino-acid sequence, 152 residues long: Protein SprT-like (152 aa).

Residues 6-151 (LQQLVCRISL…SKCLGKLELL (146 aa)) form the SprT-like domain. Zn(2+) is bound at residue histidine 67. Glutamate 68 is an active-site residue. Histidine 71 is a binding site for Zn(2+).

This sequence belongs to the SprT family. The cofactor is Zn(2+).

It is found in the cytoplasm. The sequence is that of Protein SprT-like from Lysinibacillus sphaericus (strain C3-41).